Here is a 195-residue protein sequence, read N- to C-terminus: dITP/XTP pyrophosphatase (195 aa).

8–13 contacts substrate; that stretch reads SGNAGK. Glutamate 38 and aspartate 67 together coordinate Mg(2+). Aspartate 67 (proton acceptor) is an active-site residue. Substrate contacts are provided by residues serine 68, 146–149, lysine 169, and 174–175; these read FGYD and HR.

Belongs to the HAM1 NTPase family. As to quaternary structure, homodimer. Requires Mg(2+) as cofactor.

The enzyme catalyses XTP + H2O = XMP + diphosphate + H(+). The catalysed reaction is dITP + H2O = dIMP + diphosphate + H(+). It catalyses the reaction ITP + H2O = IMP + diphosphate + H(+). Functionally, pyrophosphatase that catalyzes the hydrolysis of nucleoside triphosphates to their monophosphate derivatives, with a high preference for the non-canonical purine nucleotides XTP (xanthosine triphosphate), dITP (deoxyinosine triphosphate) and ITP. Seems to function as a house-cleaning enzyme that removes non-canonical purine nucleotides from the nucleotide pool, thus preventing their incorporation into DNA/RNA and avoiding chromosomal lesions. The polypeptide is dITP/XTP pyrophosphatase (Parasynechococcus marenigrum (strain WH8102)).